A 515-amino-acid chain; its full sequence is SWI/SNF-related matrix-associated actin-dependent regulator of chromatin subfamily D member 1 (515 aa).

Residues 1-103 (MAARAGFQSV…SGMDQSRKRP (103 aa)) are disordered. A compositionally biased stretch (gly residues) spans 14-23 (GGAGASGGAG). Residues 43–167 (APGQGLYRSP…DQTIMRKRLD (125 aa)) are interaction with ESR1, NR1H4, NR3C1, PGR and SMARCA4. Asymmetric dimethylarginine is present on residues Arg-68 and Arg-88. Lys-101 participates in a covalent cross-link: Glycyl lysine isopeptide (Lys-Gly) (interchain with G-Cter in SUMO2). The tract at residues 168–474 (IQEALKRPIK…TMTDVVGNPE (307 aa)) is interaction with SMARCC1 and SMARCC2. Residues 180–515 (RKLRIFISNT…LEQALGIRNT (336 aa)) form a necessary for GR/NR3C1-mediated remodeling and transcription from chromatin; required for GR/NR3C1 interaction with the BRG1/SMARCA4 complex in vivo region. Thr-203 is modified (phosphothreonine). N6-acetyllysine is present on Lys-223. Residues 290–367 (YQPPQFKLDP…PQRLHALLMP (78 aa)) form the SWIB/MDM2 domain. Residues 412 to 440 (ASQQEIATLDNKIHETIETINQLKTQREF) adopt a coiled-coil conformation.

Belongs to the SMARCD family. In terms of assembly, component of the multiprotein chromatin-remodeling complexes SWI/SNF: SWI/SNF-A (BAF), SWI/SNF-B (PBAF) and related complexes. The canonical complex contains a catalytic subunit (either SMARCA4/BRG1/BAF190A or SMARCA2/BRM/BAF190B), and at least SMARCE1, ACTL6A/BAF53, SMARCC1/BAF155, SMARCC2/BAF170, and SMARCB1/SNF5/BAF47. Other subunits specific to each of the complexes may also be present permitting several possible combinations developmentally and tissue specific. Component of the BAF complex, which includes at least actin (ACTB), ARID1A/BAF250A, ARID1B/BAF250B, SMARCA2/BRM, SMARCA4/BRG1/BAF190A, ACTL6A/BAF53, ACTL6B/BAF53B, SMARCE1/BAF57, SMARCC1/BAF155, SMARCC2/BAF170, SMARCB1/SNF5/INI1, and one or more SMARCD1/BAF60A, SMARCD2/BAF60B, or SMARCD3/BAF60C. In muscle cells, the BAF complex also contains DPF3. Component of neural progenitors-specific chromatin remodeling complex (npBAF complex) composed of at least, ARID1A/BAF250A or ARID1B/BAF250B, SMARCD1/BAF60A, SMARCD3/BAF60C, SMARCA2/BRM/BAF190B, SMARCA4/BRG1/BAF190A, SMARCB1/BAF47, SMARCC1/BAF155, SMARCE1/BAF57, SMARCC2/BAF170, PHF10/BAF45A, ACTL6A/BAF53A and actin. Component of neuron-specific chromatin remodeling complex (nBAF complex) composed of at least, ARID1A/BAF250A or ARID1B/BAF250B, SMARCD1/BAF60A, SMARCD3/BAF60C, SMARCA2/BRM/BAF190B, SMARCA4/BRG1/BAF190A, SMARCB1/BAF47, SMARCC1/BAF155, SMARCE1/BAF57, SMARCC2/BAF170, DPF1/BAF45B, DPF3/BAF45C, ACTL6B/BAF53B and actin. Component of the SWI/SNF-B (PBAF) chromatin remodeling complex, at least composed of SMARCA4/BRG1, SMARCB1/BAF47/SNF5, ACTL6A/BAF53A or ACTL6B/BAF53B, SMARCE1/BAF57, SMARCD1/BAF60A, SMARCD2/BAF60B, perhaps SMARCD3/BAF60C, SMARCC1/BAF155, SMARCC2/BAF170, PBRM1/BAF180, ARID2/BAF200 and actin (ACTB). Component of SWI/SNF (GBAF) subcomplex, which includes at least BICRA or BICRAL (mutually exclusive), BRD9, SS18, SMARCA2/BRM, SMARCA4/BRG1/BAF190A, ACTL6A/BAF53, SMARCC1/BAF155, and SMARCD1/BAF60A. Specifically interacts with the VDR heterodimer complex. Interacts with ESR1, NR3C1, NR1H4, PGR, SMARCA4, SMARCC1 and SMARCC2. Interacts with DPF2. Interacts with DPF3a (isoform 2 of DPF3/BAF45C) and with HDGFL2 in a DPF3a-dependent manner. Interacts with FOS, FOSB isoform 1 and 2, FOSL1 and FOSL2. As to expression, expressed in all tissues tested, including brain, heart, kidney, liver, lung, muscle, pancreas and placenta.

Its subcellular location is the nucleus. In terms of biological role, involved in transcriptional activation and repression of select genes by chromatin remodeling (alteration of DNA-nucleosome topology). Component of SWI/SNF chromatin remodeling complexes that carry out key enzymatic activities, changing chromatin structure by altering DNA-histone contacts within a nucleosome in an ATP-dependent manner. Belongs to the neural progenitors-specific chromatin remodeling complex (npBAF complex) and the neuron-specific chromatin remodeling complex (nBAF complex). During neural development a switch from a stem/progenitor to a postmitotic chromatin remodeling mechanism occurs as neurons exit the cell cycle and become committed to their adult state. The transition from proliferating neural stem/progenitor cells to postmitotic neurons requires a switch in subunit composition of the npBAF and nBAF complexes. As neural progenitors exit mitosis and differentiate into neurons, npBAF complexes which contain ACTL6A/BAF53A and PHF10/BAF45A, are exchanged for homologous alternative ACTL6B/BAF53B and DPF1/BAF45B or DPF3/BAF45C subunits in neuron-specific complexes (nBAF). The npBAF complex is essential for the self-renewal/proliferative capacity of the multipotent neural stem cells. The nBAF complex along with CREST plays a role regulating the activity of genes essential for dendrite growth. Has a strong influence on vitamin D-mediated transcriptional activity from an enhancer vitamin D receptor element (VDRE). May be a link between mammalian SWI-SNF-like chromatin remodeling complexes and the vitamin D receptor (VDR) heterodimer. Mediates critical interactions between nuclear receptors and the BRG1/SMARCA4 chromatin-remodeling complex for transactivation. Interacts with AKIRIN2. The chain is SWI/SNF-related matrix-associated actin-dependent regulator of chromatin subfamily D member 1 from Homo sapiens (Human).